We begin with the raw amino-acid sequence, 298 residues long: Lipoyl synthase (298 aa).

Positions 40, 45, 51, 67, 71, 74, and 280 each coordinate [4Fe-4S] cluster. In terms of domain architecture, Radical SAM core spans 53 to 269; it reads AVRRTATFMI…KEIALSKGFS (217 aa).

It belongs to the radical SAM superfamily. Lipoyl synthase family. [4Fe-4S] cluster serves as cofactor.

It is found in the cytoplasm. It catalyses the reaction [[Fe-S] cluster scaffold protein carrying a second [4Fe-4S](2+) cluster] + N(6)-octanoyl-L-lysyl-[protein] + 2 oxidized [2Fe-2S]-[ferredoxin] + 2 S-adenosyl-L-methionine + 4 H(+) = [[Fe-S] cluster scaffold protein] + N(6)-[(R)-dihydrolipoyl]-L-lysyl-[protein] + 4 Fe(3+) + 2 hydrogen sulfide + 2 5'-deoxyadenosine + 2 L-methionine + 2 reduced [2Fe-2S]-[ferredoxin]. Its pathway is protein modification; protein lipoylation via endogenous pathway; protein N(6)-(lipoyl)lysine from octanoyl-[acyl-carrier-protein]. Functionally, catalyzes the radical-mediated insertion of two sulfur atoms into the C-6 and C-8 positions of the octanoyl moiety bound to the lipoyl domains of lipoate-dependent enzymes, thereby converting the octanoylated domains into lipoylated derivatives. The chain is Lipoyl synthase from Geobacillus kaustophilus (strain HTA426).